The primary structure comprises 1353 residues: Protein prickle (1353 aa).

Disordered regions lie at residues 130–206 (VDDG…TKRN), 266–292 (QEEEPPEPPKPALPPKQKQPRPVPPLP), and 500–540 (AKYS…SAHA). Residues 147-165 (TPTATATAGRPLFPLSSSP) are compositionally biased toward low complexity. Residues 166 to 178 (RRSKKLLRSLRAH) are compositionally biased toward basic residues. Residues 179–189 (VKGESRPEKPA) show a composition bias toward basic and acidic residues. A compositionally biased stretch (low complexity) spans 514 to 532 (LSPALSTPSPPSLLHHPAA). Positions 548-656 (MDMQRQSHSD…NVRQLMSARP (109 aa)) constitute a PET domain. LIM zinc-binding domains follow at residues 655–719 (RPCD…ETLK), 720–780 (PRCS…MFAE), and 781–843 (YCDY…GEPP). Disordered regions lie at residues 840–892 (GEPP…HQAS), 933–962 (HCRSGDHAGGGDFTDFSGGRASSTSHNMSP), and 1062–1303 (ADIM…SSSS). Residues 861-892 (TQRVRPQTRITSSHASSSPPMSPQQQQQHQAS) show a composition bias toward low complexity. Polar residues-rich tracts occupy residues 952–962 (RASSTSHNMSP) and 1111–1120 (SLNTPLSAHS). Low complexity predominate over residues 1130–1142 (SILSGASSSSPMS). Positions 1177–1205 (GDKDRDRDRERDRDRDRDKGGDKDRESGR) are enriched in basic and acidic residues. Composition is skewed to basic residues over residues 1207–1220 (GPGHSSRRRRRRKS) and 1228–1240 (NHHRSGSGHRSHS). Residues 1269–1284 (ETAHKSPRQQRERERE) are compositionally biased toward basic and acidic residues.

It belongs to the prickle / espinas / testin family. As to quaternary structure, interacts with dsh; PET and LIM domains interact with dsh DEP domain, in wing cells. Interacts with Vang in photoreceptor cells.

It localises to the cell membrane. In terms of biological role, acts in a planar cell polarity (PCP) complex; polarization along the apical/basal axis of epithelial cells. PCP signaling in the wing disk requires the receptor fz and the cytoplasmic proteins dsh and pk. These act in a feedback loop leading to activation of the jnk cascade and subsequent polarized arrangement of hairs and bristles. Dgo and pk compete with one another for dsh binding, thereby modulating fz dsh activity and ensuring tight control over fz PCP signaling. Vang, stan and pk function together to regulate the establishment of tissue polarity in the adult eye. In Drosophila pseudoobscura pseudoobscura (Fruit fly), this protein is Protein prickle.